The following is a 158-amino-acid chain: NADPH-dependent 7-cyano-7-deazaguanine reductase (158 aa).

Cys-56 acts as the Thioimide intermediate in catalysis. Asp-63 (proton donor) is an active-site residue. Substrate contacts are provided by residues 78-80 (LES) and 97-98 (HE).

Belongs to the GTP cyclohydrolase I family. QueF type 1 subfamily.

It is found in the cytoplasm. It catalyses the reaction 7-aminomethyl-7-carbaguanine + 2 NADP(+) = 7-cyano-7-deazaguanine + 2 NADPH + 3 H(+). It functions in the pathway tRNA modification; tRNA-queuosine biosynthesis. Catalyzes the NADPH-dependent reduction of 7-cyano-7-deazaguanine (preQ0) to 7-aminomethyl-7-deazaguanine (preQ1). The polypeptide is NADPH-dependent 7-cyano-7-deazaguanine reductase (Rhodopseudomonas palustris (strain TIE-1)).